The primary structure comprises 1288 residues: SH3 domain and tetratricopeptide repeat-containing protein 2 (1288 aa).

SH3 domains are found at residues 176 to 240 and 268 to 331; these read EGHF…PLPL and IGRG…PDSY. Polar residues predominate over residues 386–395; that stretch reads NPPNDLSASQ. Disordered stretches follow at residues 386-405 and 410-444; these read NPPN…VRPG and EHQA…LPEP. TPR repeat units follow at residues 528–561, 757–790, 836–869, 1001–1037, 1084–1118, 1119–1152, 1166–1199, and 1210–1244; these read ARLC…LNGA, RALC…GQLL, GVIY…AQEV, GRLL…FIDL, LKLY…LARR, LKAV…ATLA, LVAF…CPPW, and AKVY…AVLL.

As to expression, strongly expressed in brain and spinal cord. Expressed at equal level in spinal cord and sciatic nerve. Weakly expressed in striated muscle.

The chain is SH3 domain and tetratricopeptide repeat-containing protein 2 (SH3TC2) from Homo sapiens (Human).